A 1040-amino-acid chain; its full sequence is Multidrug resistance protein MdtB (1040 aa).

12 helical membrane-spanning segments follow: residues 25-45, 347-367, 369-389, 396-416, 440-460, 472-492, 537-557, 863-883, 888-908, 910-930, 968-988, and 998-1018; these read LLMA…PVAA, LMLA…NIPA, IIPG…MVFL, LTLM…IVVI, IGFT…PLLF, FAVT…TLTP, WLTL…WIVI, LGST…VLGV, FIHP…ALLA, IIAG…LIGI, ILMT…STGV, and IAMV…TPVI.

The protein belongs to the resistance-nodulation-cell division (RND) (TC 2.A.6) family. MdtB subfamily. Part of a tripartite efflux system composed of MdtA, MdtB and MdtC. MdtB forms a heteromultimer with MdtC.

Its subcellular location is the cell inner membrane. This Salmonella agona (strain SL483) protein is Multidrug resistance protein MdtB.